The following is a 246-amino-acid chain: Complement C1q tumor necrosis factor-related protein 3 (246 aa).

The N-terminal stretch at 1-22 is a signal peptide; sequence MLWRQLIYWQLLALFFLPFCLC. In terms of domain architecture, Collagen-like spans 51–113; that stretch reads GYQGPPGPPG…KGEKGYPGIP (63 aa). The tract at residues 53 to 110 is disordered; sequence QGPPGPPGPPGIPGNHGNNGNNGATGHEGAKGEKGDKGDLGPRGERGQHGPKGEKGYP. Over residues 55–64 the composition is skewed to pro residues; it reads PPGPPGPPGI. Residues 65–74 show a composition bias toward low complexity; the sequence is PGNHGNNGNN. Residue N70 is glycosylated (N-linked (GlcNAc...) asparagine). The span at 80-107 shows a compositional bias: basic and acidic residues; the sequence is EGAKGEKGDKGDLGPRGERGQHGPKGEK. The C1q domain maps to 113–246; that stretch reads PPELQIAFMA…FAGFLLFETK (134 aa).

Post-translationally, glycosylated on Asn-70. In terms of tissue distribution, expressed in colon and small intestine.

The protein resides in the secreted. The chain is Complement C1q tumor necrosis factor-related protein 3 (C1QTNF3) from Homo sapiens (Human).